The following is a 689-amino-acid chain: Glycine--tRNA ligase beta subunit (689 aa).

The protein belongs to the class-II aminoacyl-tRNA synthetase family. In terms of assembly, tetramer of two alpha and two beta subunits.

Its subcellular location is the cytoplasm. It carries out the reaction tRNA(Gly) + glycine + ATP = glycyl-tRNA(Gly) + AMP + diphosphate. In Yersinia enterocolitica serotype O:8 / biotype 1B (strain NCTC 13174 / 8081), this protein is Glycine--tRNA ligase beta subunit.